The sequence spans 187 residues: Large ribosomal subunit protein uL10 (187 aa).

The protein belongs to the universal ribosomal protein uL10 family. Part of the ribosomal stalk of the 50S ribosomal subunit. The N-terminus interacts with L11 and the large rRNA to form the base of the stalk. The C-terminus forms an elongated spine to which L12 dimers bind in a sequential fashion forming a multimeric L10(L12)X complex.

Its function is as follows. Forms part of the ribosomal stalk, playing a central role in the interaction of the ribosome with GTP-bound translation factors. This is Large ribosomal subunit protein uL10 from Synechococcus sp. (strain JA-3-3Ab) (Cyanobacteria bacterium Yellowstone A-Prime).